The chain runs to 130 residues: Iron-sulfur cluster insertion protein ErpA (130 aa).

Residues cysteine 46, cysteine 116, and cysteine 118 each contribute to the iron-sulfur cluster site.

The protein belongs to the HesB/IscA family. Homodimer. Iron-sulfur cluster serves as cofactor.

Its function is as follows. Required for insertion of 4Fe-4S clusters for at least IspG. The polypeptide is Iron-sulfur cluster insertion protein ErpA (Legionella pneumophila (strain Lens)).